The sequence spans 31 residues: Cytochrome b6-f complex subunit 6 (31 aa).

The helical transmembrane segment at 4–24 threads the bilayer; sequence LTSYFGFLLAALTITLALFIG.

It belongs to the PetL family. The 4 large subunits of the cytochrome b6-f complex are cytochrome b6, subunit IV (17 kDa polypeptide, PetD), cytochrome f and the Rieske protein, while the 4 small subunits are PetG, PetL, PetM and PetN. The complex functions as a dimer.

It localises to the plastid. Its subcellular location is the chloroplast thylakoid membrane. In terms of biological role, component of the cytochrome b6-f complex, which mediates electron transfer between photosystem II (PSII) and photosystem I (PSI), cyclic electron flow around PSI, and state transitions. PetL is important for photoautotrophic growth as well as for electron transfer efficiency and stability of the cytochrome b6-f complex. The polypeptide is Cytochrome b6-f complex subunit 6 (Triticum aestivum (Wheat)).